A 59-amino-acid polypeptide reads, in one-letter code: uncharacterized protein (59 aa).

A disordered region spans residues 27–59 (SCFQNRPPEPASFQNLRPEPASLQNLRTEPTSF). A compositionally biased stretch (polar residues) spans 48-59 (SLQNLRTEPTSF).

This is an uncharacterized protein from Homo sapiens (Human).